We begin with the raw amino-acid sequence, 278 residues long: Complement C1q tumor necrosis factor-related protein 6 (278 aa).

An N-terminal signal peptide occupies residues 1–46; it reads MQWLRVRESPGEATGHRVTMGTAALGPVWAALLLFLLMCEIPMVEL. An N-linked (GlcNAc...) asparagine glycan is attached at Asn91. The region spanning 97-138 is the Collagen-like domain; sequence GDKGDPGPMGLPGYMGREGPQGEPGPQGSKGDKGEMGSPGAP. The tract at residues 99-135 is disordered; that stretch reads KGDPGPMGLPGYMGREGPQGEPGPQGSKGDKGEMGSP. Positions 139 to 259 constitute a C1q domain; it reads CQKRFFAFSV…KRQRENAIYS (121 aa).

It is found in the secreted. This is Complement C1q tumor necrosis factor-related protein 6 (C1QTNF6) from Homo sapiens (Human).